Here is a 123-residue protein sequence, read N- to C-terminus: WAP four-disulfide core domain protein 5 (123 aa).

The signal sequence occupies residues 1–24 (MRIQSLLLLGALLAVGSQPPAAFG). WAP domains lie at 27 to 73 (KGEK…CVPR) and 74 to 121 (VSVK…RDPV). 8 cysteine pairs are disulfide-bonded: Cys34–Cys62, Cys41–Cys66, Cys49–Cys61, Cys55–Cys70, Cys81–Cys109, Cys88–Cys113, Cys96–Cys108, and Cys102–Cys117.

Its subcellular location is the secreted. Its function is as follows. Putative acid-stable proteinase inhibitor. This Aotus nancymaae (Ma's night monkey) protein is WAP four-disulfide core domain protein 5 (WFDC5).